Reading from the N-terminus, the 197-residue chain is Adenylate kinase (197 aa).

16-21 (GAGKGT) lines the ATP pocket. Positions 36 to 65 (STGDILRDHVARGTALGQQAGPLMEAGQLV) are NMP. AMP is bound by residues Thr37, Arg42, 63–65 (QLV), 90–93 (GFPR), and Gln97. Residues 131-147 (DRGRQAVAEGRAPRADD) form an LID region. Arg132 is a binding site for ATP. The segment at 137 to 158 (VAEGRAPRADDNEETARKRQQV) is disordered. Over residues 141 to 153 (RAPRADDNEETAR) the composition is skewed to basic and acidic residues. The AMP site is built by Arg144 and Arg155. Gly183 is a binding site for ATP.

It belongs to the adenylate kinase family. Monomer.

Its subcellular location is the cytoplasm. The catalysed reaction is AMP + ATP = 2 ADP. It participates in purine metabolism; AMP biosynthesis via salvage pathway; AMP from ADP: step 1/1. Functionally, catalyzes the reversible transfer of the terminal phosphate group between ATP and AMP. Plays an important role in cellular energy homeostasis and in adenine nucleotide metabolism. The sequence is that of Adenylate kinase from Deinococcus radiodurans (strain ATCC 13939 / DSM 20539 / JCM 16871 / CCUG 27074 / LMG 4051 / NBRC 15346 / NCIMB 9279 / VKM B-1422 / R1).